A 283-amino-acid polypeptide reads, in one-letter code: Pantothenate synthetase (283 aa).

30 to 37 (MGNLHDGH) is an ATP binding site. H37 (proton donor) is an active-site residue. Q61 is a (R)-pantoate binding site. Q61 lines the beta-alanine pocket. 149–152 (GEKD) contacts ATP. (R)-pantoate is bound at residue Q155. ATP is bound by residues M178 and 186–189 (LSSR).

This sequence belongs to the pantothenate synthetase family. In terms of assembly, homodimer.

The protein localises to the cytoplasm. The catalysed reaction is (R)-pantoate + beta-alanine + ATP = (R)-pantothenate + AMP + diphosphate + H(+). Its pathway is cofactor biosynthesis; (R)-pantothenate biosynthesis; (R)-pantothenate from (R)-pantoate and beta-alanine: step 1/1. Activation requires a combination of a divalent cation, magnesium or manganese, and a monovalent cation, potassium or ammonium. Above the optimum concentration for activation, magnesium and manganese are rather inhibitory. Also activated by 2-mercaptoethanol, dithiothreitol, cysteine and glutathione. Inhibited by divalent cations (mercury, cobalt, zinc, copper, silver), chelating agents (EDTA, EGTA and o-phenanthroline), and analogs of beta-alanine (taurine, gamma-aminobutyrate, gamma-amino-beta-hydroxybutyrate). Its function is as follows. Catalyzes the condensation of pantoate with beta-alanine in an ATP-dependent reaction via a pantoyl-adenylate intermediate. This Escherichia coli (strain K12) protein is Pantothenate synthetase (panC).